The primary structure comprises 471 residues: Glutamate--tRNA ligase (471 aa).

Residues 9–19 carry the 'HIGH' region motif; it reads PSPTGYLHVGG. Zn(2+) is bound by residues Cys98, Cys100, Cys125, and His127. The short motif at 237 to 241 is the 'KMSKS' region element; it reads KLSKR. Lys240 lines the ATP pocket.

It belongs to the class-I aminoacyl-tRNA synthetase family. Glutamate--tRNA ligase type 1 subfamily. Monomer. The cofactor is Zn(2+).

Its subcellular location is the cytoplasm. The enzyme catalyses tRNA(Glu) + L-glutamate + ATP = L-glutamyl-tRNA(Glu) + AMP + diphosphate. Catalyzes the attachment of glutamate to tRNA(Glu) in a two-step reaction: glutamate is first activated by ATP to form Glu-AMP and then transferred to the acceptor end of tRNA(Glu). The chain is Glutamate--tRNA ligase from Salmonella choleraesuis (strain SC-B67).